Consider the following 353-residue polypeptide: 3-isopropylmalate dehydrogenase (353 aa).

An NAD(+)-binding site is contributed by 76 to 89 (GPKWDDPRAKVRPE). Residues Arg-96, Arg-106, Arg-134, and Asp-223 each contribute to the substrate site. Mg(2+) contacts are provided by Asp-223, Asp-247, and Asp-251. Position 281-293 (281-293 (GSAPDIAGKGIAN)) interacts with NAD(+).

Belongs to the isocitrate and isopropylmalate dehydrogenases family. LeuB type 1 subfamily. In terms of assembly, homodimer. The cofactor is Mg(2+). It depends on Mn(2+) as a cofactor.

It localises to the cytoplasm. It carries out the reaction (2R,3S)-3-isopropylmalate + NAD(+) = 4-methyl-2-oxopentanoate + CO2 + NADH. It functions in the pathway amino-acid biosynthesis; L-leucine biosynthesis; L-leucine from 3-methyl-2-oxobutanoate: step 3/4. Functionally, catalyzes the oxidation of 3-carboxy-2-hydroxy-4-methylpentanoate (3-isopropylmalate) to 3-carboxy-4-methyl-2-oxopentanoate. The product decarboxylates to 4-methyl-2 oxopentanoate. The chain is 3-isopropylmalate dehydrogenase from Anaeromyxobacter dehalogenans (strain 2CP-C).